We begin with the raw amino-acid sequence, 373 residues long: Polygalacturonase (373 aa).

The first 24 residues, 1–24, serve as a signal peptide directing secretion; it reads MVRNIVSRLCSQLFALPSSSLQER. A disulfide bridge connects residues Cys27 and Cys42. 2 N-linked (GlcNAc...) asparagine glycosylation sites follow: Asn65 and Asn94. 8 PbH1 repeats span residues 136 to 158, 159 to 197, 198 to 219, 220 to 240, 249 to 270, 278 to 300, 312 to 333, and 345 to 369; these read TGNS…DITG, SSQL…DISS, SDHV…AVTS, GTNI…SIGS, VDGV…RIKS, INNV…DVQQ, TNGV…ASSA, and CSGF…YPTN. Asp212 functions as the Proton donor in the catalytic mechanism. The cysteines at positions 214 and 230 are disulfide-linked. His234 is a catalytic residue. Asn280 and Asn290 each carry an N-linked (GlcNAc...) asparagine glycan. 2 disulfides stabilise this stretch: Cys340–Cys345 and Cys364–Cys371.

The protein belongs to the glycosyl hydrolase 28 family.

The protein resides in the secreted. It carries out the reaction (1,4-alpha-D-galacturonosyl)n+m + H2O = (1,4-alpha-D-galacturonosyl)n + (1,4-alpha-D-galacturonosyl)m.. Functionally, involved in maceration and soft-rotting of plant tissue. Hydrolyzes the 1,4-alpha glycosidic bonds of de-esterified pectate in the smooth region of the plant cell wall. In Fusarium fujikuroi (Bakanae and foot rot disease fungus), this protein is Polygalacturonase (PGA).